Reading from the N-terminus, the 370-residue chain is Aminomethyltransferase (370 aa).

This sequence belongs to the GcvT family. In terms of assembly, the glycine cleavage system is composed of four proteins: P, T, L and H.

The catalysed reaction is N(6)-[(R)-S(8)-aminomethyldihydrolipoyl]-L-lysyl-[protein] + (6S)-5,6,7,8-tetrahydrofolate = N(6)-[(R)-dihydrolipoyl]-L-lysyl-[protein] + (6R)-5,10-methylene-5,6,7,8-tetrahydrofolate + NH4(+). The glycine cleavage system catalyzes the degradation of glycine. The sequence is that of Aminomethyltransferase from Clostridium botulinum (strain Langeland / NCTC 10281 / Type F).